Reading from the N-terminus, the 320-residue chain is Heterogeneous nuclear ribonucleoprotein A1-like 3 (320 aa).

2 RRM domains span residues 14 to 97 and 105 to 184; these read RKLF…DSQR and KKIF…LSKQ. 2 disordered regions span residues 182 to 218 and 271 to 320; these read SKQEMASASSSQRGRSGSGNFGGGRGGGFGGNDNFGR and SNFG…GRRF. Gly residues predominate over residues 197-218; it reads SGSGNFGGGRGGGFGGNDNFGR. Positions 308–320 are enriched in low complexity; sequence SSSSSSYGSGRRF.

This Homo sapiens (Human) protein is Heterogeneous nuclear ribonucleoprotein A1-like 3.